The sequence spans 112 residues: ATP synthase epsilon chain (112 aa).

The protein belongs to the ATPase epsilon chain family. As to quaternary structure, F-type ATPases have 2 components, CF(1) - the catalytic core - and CF(0) - the membrane proton channel. CF(1) has five subunits: alpha(3), beta(3), gamma(1), delta(1), epsilon(1). CF(0) has three main subunits: a, b and c.

Its subcellular location is the cell inner membrane. Its function is as follows. Produces ATP from ADP in the presence of a proton gradient across the membrane. The chain is ATP synthase epsilon chain from Rickettsia felis (strain ATCC VR-1525 / URRWXCal2) (Rickettsia azadi).